Consider the following 232-residue polypeptide: Octanoyltransferase (232 aa).

In terms of domain architecture, BPL/LPL catalytic spans Leu43–Ile231. Substrate contacts are provided by residues Arg88 to His95, Ala160 to Gly162, and Gly173 to Ala175. Catalysis depends on Cys191, which acts as the Acyl-thioester intermediate.

It belongs to the LipB family.

Its subcellular location is the cytoplasm. The catalysed reaction is octanoyl-[ACP] + L-lysyl-[protein] = N(6)-octanoyl-L-lysyl-[protein] + holo-[ACP] + H(+). Its pathway is protein modification; protein lipoylation via endogenous pathway; protein N(6)-(lipoyl)lysine from octanoyl-[acyl-carrier-protein]: step 1/2. Its function is as follows. Catalyzes the transfer of endogenously produced octanoic acid from octanoyl-acyl-carrier-protein onto the lipoyl domains of lipoate-dependent enzymes. Lipoyl-ACP can also act as a substrate although octanoyl-ACP is likely to be the physiological substrate. The chain is Octanoyltransferase from Flavobacterium johnsoniae (strain ATCC 17061 / DSM 2064 / JCM 8514 / BCRC 14874 / CCUG 350202 / NBRC 14942 / NCIMB 11054 / UW101) (Cytophaga johnsonae).